Consider the following 360-residue polypeptide: Phospho-N-acetylmuramoyl-pentapeptide-transferase (360 aa).

The Periplasmic segment spans residues 1-25; the sequence is MLVWLAEHLVKYYSGFNVFSYLTFR. The chain crosses the membrane as a helical span at residues 26 to 46; it reads AIVSLLTALFISLWMGPRMIA. The Cytoplasmic segment spans residues 47–71; the sequence is RLQKLSFGQVVRNDGPESHFSKRGT. Residues 72–92 form a helical membrane-spanning segment; it reads PTMGGIMILTAIVISVLLWAY. A topological domain (periplasmic) is located at residue P93. A helical membrane pass occupies residues 94 to 114; it reads SNPYVWCVLVVLIGYGIIGFV. The Cytoplasmic portion of the chain corresponds to 115–131; that stretch reads DDYHKVVRKDTKGLIAR. The chain crosses the membrane as a helical span at residues 132 to 152; it reads WKYFWMSVIALGVAFALYLVG. The Periplasmic portion of the chain corresponds to 153–167; that stretch reads KDTPATQLVVPFFKD. A helical transmembrane segment spans residues 168–188; sequence VMPQLGLFYILLSYFVIVGTG. Residues 189-198 lie on the Cytoplasmic side of the membrane; that stretch reads NAVNLTDGLD. The chain crosses the membrane as a helical span at residues 199-219; it reads GLAIMPTVFVAAGFALVAWAT. At 220–235 the chain is on the periplasmic side; it reads GNMNFANYLHIPYLRY. A helical transmembrane segment spans residues 236–256; sequence AGELVIVCTAIVGAGLGFLWF. Residues 257–262 are Cytoplasmic-facing; sequence NTYPAQ. The chain crosses the membrane as a helical span at residues 263-283; it reads VFMGDVGSLALGGALGIIAVL. At 284–287 the chain is on the periplasmic side; it reads LRQE. The chain crosses the membrane as a helical span at residues 288 to 308; sequence FLLVIMGGVFVVETLSVILQV. Residues 309-337 lie on the Cytoplasmic side of the membrane; sequence GSFKLRGQRIFRMAPIHHHYELKGWPEPR. Residues 338-358 form a helical membrane-spanning segment; the sequence is VIVRFWIISLMLVLIGLATLK. Residues 359–360 are Periplasmic-facing; it reads VR.

It belongs to the glycosyltransferase 4 family. MraY subfamily. Mg(2+) serves as cofactor.

Its subcellular location is the cell inner membrane. The catalysed reaction is UDP-N-acetyl-alpha-D-muramoyl-L-alanyl-gamma-D-glutamyl-meso-2,6-diaminopimeloyl-D-alanyl-D-alanine + di-trans,octa-cis-undecaprenyl phosphate = di-trans,octa-cis-undecaprenyl diphospho-N-acetyl-alpha-D-muramoyl-L-alanyl-D-glutamyl-meso-2,6-diaminopimeloyl-D-alanyl-D-alanine + UMP. The protein operates within cell wall biogenesis; peptidoglycan biosynthesis. In terms of biological role, catalyzes the initial step of the lipid cycle reactions in the biosynthesis of the cell wall peptidoglycan: transfers peptidoglycan precursor phospho-MurNAc-pentapeptide from UDP-MurNAc-pentapeptide onto the lipid carrier undecaprenyl phosphate, yielding undecaprenyl-pyrophosphoryl-MurNAc-pentapeptide, known as lipid I. This is Phospho-N-acetylmuramoyl-pentapeptide-transferase from Salmonella paratyphi A (strain ATCC 9150 / SARB42).